The following is a 245-amino-acid chain: Carbohydrate deacetylase (245 aa).

2 residues coordinate Mg(2+): His-59 and His-125.

The protein belongs to the YdjC deacetylase family. Homodimer. It depends on Mg(2+) as a cofactor.

Probably catalyzes the deacetylation of acetylated carbohydrates an important step in the degradation of oligosaccharides. This chain is Carbohydrate deacetylase, found in Listeria monocytogenes serotype 4b (strain CLIP80459).